A 770-amino-acid chain; its full sequence is ARF GTPase-activating protein GIT1 (770 aa).

Positions 1–124 constitute an Arf-GAP domain; that stretch reads MSRKGPRAEV…AFVHKLPCRD (124 aa). Residues 1 to 124 are interaction with gamma-tubulin and localization to the centrosome; that stretch reads MSRKGPRAEV…AFVHKLPCRD (124 aa). The C4-type zinc finger occupies 11–34; it reads CADCSAPDPGWASISRGVLVCDEC. ANK repeat units lie at residues 132–161, 166–195, and 199–228; these read DLSKQLHSSVRTGNLETCLRLLSLGAQANF, KGTTPLHVAAKAGQTLQAELLVVYGADPGS, and NGRTPIDYARQAGHHELAERLVECQYELTD. Residue tyrosine 224 is modified to Phosphotyrosine. Residues 245–374 form an interaction with PCLO region; sequence HYIIPQMADR…QGKSLSSPTD (130 aa). Positions 253–424 are interaction with PTK2/FAK1; sequence DRSRQKCMSQ…NRARSMDSSD (172 aa). Residues 254 to 376 form an interaction with ARHGEF7 region; that stretch reads RSRQKCMSQS…KSLSSPTDNL (123 aa). The segment at 363–425 is disordered; it reads RQQGKSLSSP…RARSMDSSDL (63 aa). Polar residues predominate over residues 366-383; it reads GKSLSSPTDNLELSARNQ. Serine 368 and serine 371 each carry phosphoserine. Phosphothreonine is present on threonine 373. An interaction with NCK2 and GRIN3A region spans residues 375 to 596; it reads NLELSARNQS…QEGSRHASKL (222 aa). The tract at residues 375–596 is required for localization at synapses; that stretch reads NLELSARNQS…QEGSRHASKL (222 aa). Phosphoserine occurs at positions 379 and 384. Tyrosine 392 carries the post-translational modification Phosphotyrosine. Residues serine 394 and serine 397 each carry the phosphoserine modification. A compositionally biased stretch (acidic residues) spans 394–403; sequence SVASDEDTDQ. Residue threonine 401 is modified to Phosphothreonine. Serine 419, serine 422, and serine 426 each carry phosphoserine. Residues 420-475 form an interaction with MAPK1 region; it reads MDSSDLSDGAVTLQEYLELKKALATSEAKVQQLMKVNSSLSDELRKLQREIHKLQA. The tract at residues 429-629 is interaction with IKBKG; that stretch reads AVTLQEYLEL…EGKRFLELSK (201 aa). Residues 449 to 483 adopt a coiled-coil conformation; that stretch reads VQQLMKVNSSLSDELRKLQREIHKLQAENLQLRQP. Phosphoserine occurs at positions 507 and 545. A Phosphothreonine modification is found at threonine 546. Tyrosine 554 and tyrosine 563 each carry phosphotyrosine. Residues serine 570, serine 580, serine 601, and serine 605 each carry the phosphoserine modification. Over residues 574–586 the composition is skewed to low complexity; that stretch reads VTFTPSSPLLSSS. Residues 574–615 form a disordered region; the sequence is VTFTPSSPLLSSSQEGSRHASKLSRHGSGAESDYENTQSGEP. Threonine 610 is modified (phosphothreonine). Serine 639 carries the phosphoserine modification. The tract at residues 646-770 is interaction with PXN and TGFB1I1; it reads PGLPSTEDVI…VTITTREKKQ (125 aa).

In terms of assembly, forms homodimers and possibly oligomers. May form heterooligomers with GIT2. Interacts with G protein-coupled receptor kinases, including GRK2, GRK3, GRK5 and GRK6. Interacts with PPFIA1, PPFIA2 and PPFIA4. Interacts with GRIP1 and forms a ternary complex with PPFIA1 and GRIP1. Directly interacts with ARHGEF7/beta-PIX, forming in vitro a heptameric complex made of a GIT1 dimer and an ARHGEF7 trimer. Directly interacts with PXN/paxillin; this interaction is enhanced in the presence of ARHGEF7. Directly interacts (via C-terminus) with TGFB1I1/Hic-5 (via LD motif 3). Directly interacts with PTK2/FAK1. May interact with PTK2B/PYK2; this interaction may be indirect. Interacts with AMPA receptors GRIA2/3. Directly interacts with protein Piccolo/PCLO. Forms a complex with Ephrin-B1/EFNB1 and NCK2/GRB4 (via SH2); this interaction is important for spine morphogenesis and synapse formation. Interaction with NCK2 is transient and depends upon GIT1 phosphorylation at Tyr-392. Interacts with GRIN3A/GluN3A (via C-terminus); this interaction competes with GIT1 interaction with ARHGEF7 and limits synaptic localization of GIT1. Interacts with IKBKG/NEMO in resting bone mesenchymal stem cells, as well as in TNF-stimulated cells; this interaction may increase IKBKG affinity for 'Lys-63'-linked polyubiquitin chains. Interacts with GABA(A) receptors, including GABRB3 and GABRG2. Interacts with SCRIB. Interacts (via N- and C-terminus) with ENTR1/SDCCAG3 (via N-terminus); this interaction is direct. May form a tripartite complex with ENTR1 and PTPN13. Interacts with YWHAZ. Interacts with PAK1 and PAK3. Directly interacts (via N-terminus) with gamma-tubulin. Interacts with MAPK1 and MAPK3; this interaction is required for MAPK1/3 recruitment to focal adhesions. In terms of processing, phosphorylated on tyrosine residues by PTK2/FAK1 and SRC in growing fibroblasts. Phosphorylation at Tyr-392 is induced by activation of Ephrin-B1/EFNB1 and catalyzed by SRC family kinases. It is required for the interaction with NCK2 and for GIT1 recruitment to synapses in hippocampal neurons. Widely expressed. Expressed at high levels in testis (at protein level). Expressed in the brain, including in CA1 hippocampal neurons, in the amygdala, and thalamic nuclei (at protein level).

The protein localises to the cytoplasm. It is found in the synapse. The protein resides in the presynapse. It localises to the postsynapse. Its subcellular location is the postsynaptic density. The protein localises to the cell junction. It is found in the focal adhesion. The protein resides in the cell projection. It localises to the lamellipodium. Its subcellular location is the cytoskeleton. The protein localises to the microtubule organizing center. It is found in the centrosome. The protein resides in the spindle pole. GTPase-activating protein for ADP ribosylation factor family members, including ARF1. Multidomain scaffold protein that interacts with numerous proteins and therefore participates in many cellular functions, including receptor internalization, focal adhesion remodeling, and signaling by both G protein-coupled receptors and tyrosine kinase receptors. Through PAK1 activation, positively regulates microtubule nucleation during interphase. Plays a role in the regulation of cytokinesis; for this function, may act in a pathway also involving ENTR1 and PTPN13. May promote cell motility both by regulating focal complex dynamics and by the activation of RAC1. May act as scaffold for MAPK1/3 signal transduction, recruiting MAPK1/3 to focal adhesions after EGF stimulation via a Src-dependent pathway, hence stimulating cell migration. Plays a role in brain development and function. Involved in the regulation of spine density and synaptic plasticity that is required for processes involved in learning. Plays an important role in dendritic spine morphogenesis and synapse formation. In hippocampal neurons, recruits guanine nucleotide exchange factors (GEFs), such as ARHGEF7/beta-PIX, to the synaptic membrane. These in turn locally activate RAC1, which is an essential step for spine morphogenesis and synapse formation. May contribute to the organization of presynaptic active zones through oligomerization and formation of a Piccolo/PCLO-based protein network, which includes ARHGEF7/beta-PIX and FAK1. In neurons, through its interaction with liprin-alpha family members, may be required for AMPA receptor (GRIA2/3) proper targeting to the cell membrane. In complex with GABA(A) receptors and ARHGEF7, plays a crucial role in regulating GABA(A) receptor synaptic stability, maintaining GPHN/gephyrin scaffolds and hence GABAergic inhibitory synaptic transmission, by locally coordinating RAC1 and PAK1 downstream effector activity, leading to F-actin stabilization. May also be important for RAC1 downstream signaling pathway through PAK3 and regulation of neuronal inhibitory transmission at presynaptic input. Required for successful bone regeneration during fracture healing. The function in intramembranous ossification may, at least partly, exerted by macrophages in which GIT1 is a key negative regulator of redox homeostasis, IL1B production, and glycolysis, acting through the ERK1/2/NRF2/NFE2L2 axis. May also play a role in angiogenesis during fracture healing. In this process, may regulate activation of the canonical NF-kappa-B signal in bone mesenchymal stem cells by enhancing the interaction between NEMO and 'Lys-63'-ubiquitinated RIPK1/RIP1, eventually leading to enhanced production of VEGFA and others angiogenic factors. Essential for VEGF signaling through the activation of phospholipase C-gamma and ERK1/2, hence may control endothelial cell proliferation and angiogenesis. The chain is ARF GTPase-activating protein GIT1 from Rattus norvegicus (Rat).